The chain runs to 363 residues: Putative dipeptidase YkvY (363 aa).

Positions 222, 233, 297, 326, and 340 each coordinate Mn(2+).

The protein belongs to the peptidase M24B family. It depends on Mn(2+) as a cofactor.

The protein is Putative dipeptidase YkvY (ykvY) of Bacillus subtilis (strain 168).